The chain runs to 255 residues: Glutamate racemase (255 aa).

Substrate is bound by residues D7–S8 and Y39–G40. C70 serves as the catalytic Proton donor/acceptor. Residue N71–T72 participates in substrate binding. The Proton donor/acceptor role is filled by C181. T182 to H183 contributes to the substrate binding site.

This sequence belongs to the aspartate/glutamate racemases family.

It catalyses the reaction L-glutamate = D-glutamate. It participates in cell wall biogenesis; peptidoglycan biosynthesis. Functionally, provides the (R)-glutamate required for cell wall biosynthesis. The sequence is that of Glutamate racemase from Helicobacter acinonychis (strain Sheeba).